The primary structure comprises 526 residues: Bifunctional purine biosynthesis protein PurH (526 aa).

An MGS-like domain is found at 1–145 (MSKAPLALLS…KNHAHVGIVT (145 aa)).

The protein belongs to the PurH family.

The enzyme catalyses (6R)-10-formyltetrahydrofolate + 5-amino-1-(5-phospho-beta-D-ribosyl)imidazole-4-carboxamide = 5-formamido-1-(5-phospho-D-ribosyl)imidazole-4-carboxamide + (6S)-5,6,7,8-tetrahydrofolate. It catalyses the reaction IMP + H2O = 5-formamido-1-(5-phospho-D-ribosyl)imidazole-4-carboxamide. The protein operates within purine metabolism; IMP biosynthesis via de novo pathway; 5-formamido-1-(5-phospho-D-ribosyl)imidazole-4-carboxamide from 5-amino-1-(5-phospho-D-ribosyl)imidazole-4-carboxamide (10-formyl THF route): step 1/1. It participates in purine metabolism; IMP biosynthesis via de novo pathway; IMP from 5-formamido-1-(5-phospho-D-ribosyl)imidazole-4-carboxamide: step 1/1. The sequence is that of Bifunctional purine biosynthesis protein PurH from Psychrobacter cryohalolentis (strain ATCC BAA-1226 / DSM 17306 / VKM B-2378 / K5).